A 438-amino-acid chain; its full sequence is Aspartate--tRNA(Asp/Asn) ligase (438 aa).

Residue Glu-176 participates in L-aspartate binding. The tract at residues 198–201 is aspartate; the sequence is QLYK. Arg-220 serves as a coordination point for L-aspartate. Residues 220-222, 228-230, and Glu-361 contribute to the ATP site; these read RAE and RHL. Residues Glu-361 and Ser-364 each coordinate Mg(2+). Positions 364 and 368 each coordinate L-aspartate. 409 to 412 serves as a coordination point for ATP; sequence GADR.

Belongs to the class-II aminoacyl-tRNA synthetase family. Type 2 subfamily. In terms of assembly, homodimer. Mg(2+) serves as cofactor.

The protein resides in the cytoplasm. It catalyses the reaction tRNA(Asx) + L-aspartate + ATP = L-aspartyl-tRNA(Asx) + AMP + diphosphate. In terms of biological role, aspartyl-tRNA synthetase with relaxed tRNA specificity since it is able to aspartylate not only its cognate tRNA(Asp) but also tRNA(Asn). Reaction proceeds in two steps: L-aspartate is first activated by ATP to form Asp-AMP and then transferred to the acceptor end of tRNA(Asp/Asn). This is Aspartate--tRNA(Asp/Asn) ligase from Methanococcus maripaludis (strain C5 / ATCC BAA-1333).